The following is a 252-amino-acid chain: 2-succinyl-6-hydroxy-2,4-cyclohexadiene-1-carboxylate synthase (252 aa).

Belongs to the AB hydrolase superfamily. MenH family. In terms of assembly, monomer.

The enzyme catalyses 5-enolpyruvoyl-6-hydroxy-2-succinyl-cyclohex-3-ene-1-carboxylate = (1R,6R)-6-hydroxy-2-succinyl-cyclohexa-2,4-diene-1-carboxylate + pyruvate. Its pathway is quinol/quinone metabolism; 1,4-dihydroxy-2-naphthoate biosynthesis; 1,4-dihydroxy-2-naphthoate from chorismate: step 3/7. The protein operates within quinol/quinone metabolism; menaquinone biosynthesis. Catalyzes a proton abstraction reaction that results in 2,5-elimination of pyruvate from 2-succinyl-5-enolpyruvyl-6-hydroxy-3-cyclohexene-1-carboxylate (SEPHCHC) and the formation of 2-succinyl-6-hydroxy-2,4-cyclohexadiene-1-carboxylate (SHCHC). The sequence is that of 2-succinyl-6-hydroxy-2,4-cyclohexadiene-1-carboxylate synthase from Shigella boydii serotype 4 (strain Sb227).